Reading from the N-terminus, the 200-residue chain is Small ribosomal subunit protein uS4 (200 aa).

Positions 22–41 are disordered; sequence TGKEIEKRPYAPGQHGPNQR. Residues 92–152 enclose the S4 RNA-binding domain; it reads TRLDNLVYRL…EKSQNLAVVG (61 aa).

The protein belongs to the universal ribosomal protein uS4 family. As to quaternary structure, part of the 30S ribosomal subunit. Contacts protein S5. The interaction surface between S4 and S5 is involved in control of translational fidelity.

Functionally, one of the primary rRNA binding proteins, it binds directly to 16S rRNA where it nucleates assembly of the body of the 30S subunit. In terms of biological role, with S5 and S12 plays an important role in translational accuracy. The sequence is that of Small ribosomal subunit protein uS4 from Lysinibacillus sphaericus (strain C3-41).